The following is a 414-amino-acid chain: Glutamyl-tRNA reductase (414 aa).

Substrate contacts are provided by residues 49-52, S108, 113-115, and Q119; these read TCNR and EPQ. The Nucleophile role is filled by C50. 188–193 contributes to the NADP(+) binding site; the sequence is GAGQTG.

Belongs to the glutamyl-tRNA reductase family. In terms of assembly, homodimer.

It carries out the reaction (S)-4-amino-5-oxopentanoate + tRNA(Glu) + NADP(+) = L-glutamyl-tRNA(Glu) + NADPH + H(+). Its pathway is porphyrin-containing compound metabolism; protoporphyrin-IX biosynthesis; 5-aminolevulinate from L-glutamyl-tRNA(Glu): step 1/2. In terms of biological role, catalyzes the NADPH-dependent reduction of glutamyl-tRNA(Glu) to glutamate 1-semialdehyde (GSA). This Francisella tularensis subsp. holarctica (strain FTNF002-00 / FTA) protein is Glutamyl-tRNA reductase.